A 1456-amino-acid polypeptide reads, in one-letter code: Retrovirus-related Pol polyprotein from transposon RE2 (1456 aa).

The disordered stretch occupies residues 205 to 252 (NVVTHRNTNTNRNQNNRGDNRNYNNNNNRSNSWQPSSSGSRSDNRQPK). A compositionally biased stretch (low complexity) spans 210-245 (RNTNTNRNQNNRGDNRNYNNNNNRSNSWQPSSSGSR). The CCHC-type zinc-finger motif lies at 257 to 273 (RCQICSVQGHSAKRCPQ). Low complexity predominate over residues 276-291 (QFQSTTNQQQSTSPFT). A disordered region spans residues 276-295 (QFQSTTNQQQSTSPFTPWQP). D313 acts as the For protease activity in catalysis. An Integrase catalytic domain is found at 498–661 (TSSKPLEYIY…SPFQKLFGQP (164 aa)). 2 residues coordinate Mg(2+): D509 and D571. A compositionally biased stretch (polar residues) spans 738–754 (STSQEQRSDSAPNWPSH). Residues 738–896 (STSQEQRSDS…PPLPPVLPAP (159 aa)) form a disordered region. Positions 793–814 (SSSNLPSSSISSPSSSEPTAPS) are enriched in low complexity. Over residues 816 to 827 (NGPQPTAQPHQT) the composition is skewed to polar residues. 2 stretches are compositionally biased toward low complexity: residues 828–841 (QNSN…NNPN) and 849–886 (SPNQ…STST). A compositionally biased stretch (pro residues) spans 887–896 (PPLPPVLPAP). Positions 965 to 1208 (NHTWDLVPPP…LTAKPVATPM (244 aa)) constitute a Reverse transcriptase Ty1/copia-type domain.

It catalyses the reaction DNA(n) + a 2'-deoxyribonucleoside 5'-triphosphate = DNA(n+1) + diphosphate. The chain is Retrovirus-related Pol polyprotein from transposon RE2 (RE2) from Arabidopsis thaliana (Mouse-ear cress).